A 150-amino-acid polypeptide reads, in one-letter code: Large ribosomal subunit protein uL15 (150 aa).

The segment at 1–57 (MRLEDIRPQAGSTRRRRRLGRGVSAGQGASCGKGMRGQKARKGGSTRPGFEGGQTPL) is disordered. A compositionally biased stretch (gly residues) spans 23–35 (VSAGQGASCGKGM).

Belongs to the universal ribosomal protein uL15 family. Part of the 50S ribosomal subunit.

Functionally, binds to the 23S rRNA. This chain is Large ribosomal subunit protein uL15, found in Synechococcus sp. (strain JA-2-3B'a(2-13)) (Cyanobacteria bacterium Yellowstone B-Prime).